A 500-amino-acid chain; its full sequence is Cytochrome c-552 (500 aa).

The N-terminal stretch at 1–24 (MKFLIKSLAVATISILGCLQTALA) is a signal peptide. Residues His-102, Cys-130, Cys-133, Lys-134, Cys-168, Cys-171, His-172, Cys-217, Cys-220, and His-221 each coordinate heme c. Ca(2+) is bound by residues Glu-223, Tyr-224, Lys-268, and Gln-270. Tyr-224 is a binding site for substrate. His-271 provides a ligand contact to substrate. Heme c contacts are provided by His-282, Cys-289, Cys-292, His-293, His-308, Cys-321, Cys-324, His-325, and His-400. Positions 477-500 (ARAKGLLPAEEADKPVAAPKAEAK) are disordered.

Belongs to the cytochrome c-552 family. Ca(2+) serves as cofactor. Requires heme c as cofactor.

It is found in the periplasm. The catalysed reaction is 6 Fe(III)-[cytochrome c] + NH4(+) + 2 H2O = 6 Fe(II)-[cytochrome c] + nitrite + 8 H(+). It participates in nitrogen metabolism; nitrate reduction (assimilation). Functionally, catalyzes the reduction of nitrite to ammonia, consuming six electrons in the process. The protein is Cytochrome c-552 of Mannheimia haemolytica (Pasteurella haemolytica).